We begin with the raw amino-acid sequence, 1218 residues long: Protein jagged-1 (1218 aa).

An N-terminal signal peptide occupies residues 1 to 33 (MRSPRTRGRSGRPLSLLLALLCALRAKVCGASG). Residues 34 to 1067 (QFELEILSMQ…QRRPLKNRTD (1034 aa)) lie on the Extracellular side of the membrane. A glycan (N-linked (GlcNAc...) asparagine) is linked at Asn-143. The DSL domain maps to 185-229 (VTCDDYYYGFGCNKFCRPRDDFFGHYACDQNGNKTCMEGWMGPEC). Disulfide bonds link Cys-187–Cys-196 and Cys-200–Cys-212. An important for interaction with NOTCH1 region spans residues 199–207 (FCRPRDDFF). A glycan (N-linked (GlcNAc...) asparagine) is linked at Asn-217. Cystine bridges form between Cys-220/Cys-229, Cys-234/Cys-245, Cys-238/Cys-251, Cys-253/Cys-262, Cys-265/Cys-276, Cys-271/Cys-282, Cys-284/Cys-293, Cys-300/Cys-312, Cys-306/Cys-322, Cys-324/Cys-333, Cys-340/Cys-351, Cys-345/Cys-360, Cys-362/Cys-371, Cys-378/Cys-389, Cys-383/Cys-398, Cys-400/Cys-409, Cys-416/Cys-427, Cys-421/Cys-436, Cys-438/Cys-447, Cys-454/Cys-464, Cys-458/Cys-473, Cys-475/Cys-484, Cys-491/Cys-502, Cys-496/Cys-511, Cys-513/Cys-522, Cys-529/Cys-540, Cys-534/Cys-549, Cys-551/Cys-560, Cys-578/Cys-605, Cys-599/Cys-615, Cys-617/Cys-626, Cys-633/Cys-644, Cys-638/Cys-653, Cys-655/Cys-664, Cys-671/Cys-682, Cys-676/Cys-691, Cys-693/Cys-702, Cys-709/Cys-720, Cys-714/Cys-729, and Cys-731/Cys-740. Residues 230-263 (NRAICRQGCSPKHGSCKLPGDCRCQYGWQGLYCD) form the EGF-like 1 domain. An EGF-like 2; atypical domain is found at 264–294 (KCIPHPGCVHGICNEPWQCLCETNWGGQLCD). 2 consecutive EGF-like domains span residues 296-334 (DLNY…PNCE) and 336-372 (AEHA…PTCS). The 37-residue stretch at 374 to 410 (NIDDCSPNNCSHGGTCQDLVNGFKCVCPPQWTGKTCQ) folds into the EGF-like 5; calcium-binding domain. N-linked (GlcNAc...) asparagine glycosylation is present at Asn-382. The EGF-like 6; calcium-binding domain occupies 412 to 448 (DANECEAKPCVNAKSCKNLIASYYCDCLPGWMGQNCD). The EGF-like 7; calcium-binding domain maps to 450–485 (NINDCLGQCQNDASCRDLVNGYRCICPPGYAGDHCE). Residues 487–523 (DIDECASNPCLNGGHCQNEINRFQCLCPTGFSGNLCQ) form the EGF-like 8; calcium-binding domain. EGF-like domains lie at 525–561 (DIDY…KNCS) and 586–627 (DTPE…TYCH). N-linked (GlcNAc...) asparagine glycosylation is present at Asn-559. Residues 629 to 665 (NINDCESNPCRNGGTCIDGVNSYKCICSDGWEGAYCE) form the EGF-like 11; calcium-binding domain. In terms of domain architecture, EGF-like 12; calcium-binding spans 667-703 (NINDCSQNPCHNGGTCRDLVNDFYCDCKNGWKGKTCH). 2 consecutive EGF-like domains span residues 705-741 (RDSQ…TTCN) and 744-780 (RNSS…PICA). N-linked (GlcNAc...) asparagine glycosylation is present at Asn-745. Intrachain disulfides connect Cys-748/Cys-759, Cys-753/Cys-768, Cys-770/Cys-779, Cys-786/Cys-797, Cys-791/Cys-806, Cys-808/Cys-817, Cys-824/Cys-835, Cys-829/Cys-844, and Cys-846/Cys-855. The 37-residue stretch at 782 to 818 (NTNDCSPHPCYNSGTCVDGDNWYRCECAPGFAGPDCR) folds into the EGF-like 15; calcium-binding domain. In terms of domain architecture, EGF-like 16; calcium-binding spans 820–856 (NINECQSSPCAFGATCVDEINGYRCVCPPGHSGAKCQ). N-linked (GlcNAc...) asparagine glycans are attached at residues Asn-960, Asn-991, Asn-1045, and Asn-1064. A helical transmembrane segment spans residues 1068–1093 (FLVPLLSSVLTVAWICCLVTAFYWCL). Over 1094–1218 (RKRRKPGSHT…QSLNRMEYIV (125 aa)) the chain is Cytoplasmic. The interval 1152–1218 (HNSEVEEDDM…QSLNRMEYIV (67 aa)) is disordered. Over residues 1189 to 1199 (TPTKHPNWTNK) the composition is skewed to polar residues.

As to quaternary structure, interacts with NOTCH2 and NOTCH3. Interacts with NOTCH1 (in the presence of calcium ions). Widely expressed in adult and fetal tissues. In cervix epithelium expressed in undifferentiated subcolumnar reserve cells and squamous metaplasia. Expression is up-regulated in cervical squamous cell carcinoma. Expressed in bone marrow cell line HS-27a which supports the long-term maintenance of immature progenitor cells.

The protein localises to the membrane. It is found in the cell membrane. Ligand for multiple Notch receptors and involved in the mediation of Notch signaling. May be involved in cell-fate decisions during hematopoiesis. Seems to be involved in early and late stages of mammalian cardiovascular development. Inhibits myoblast differentiation. Enhances fibroblast growth factor-induced angiogenesis (in vitro). The chain is Protein jagged-1 (JAG1) from Homo sapiens (Human).